A 526-amino-acid polypeptide reads, in one-letter code: Protein spinster homolog 1 (526 aa).

Residues 1 to 43 (MTSRSSQGDAAPFLTQADNTEEEGAPDPGGHSSDEEEEEGKDH) form a disordered region. The next 12 helical transmembrane spans lie at 48-68 (HLLTGISYRHSVTIVIILFYI), 98-118 (GLVQTVFICSYMFLAPVFGYL), 126-146 (LIMCIGISFWSLVTLLSSFVS), 159-179 (LVGVGEASYSTIAPTIIADLF), 187-207 (MLSFFYFATPVGCGLGYIAGS), 218-238 (WALRVTPGLGLVAVLLLIFVA), 272-292 (FILSTFGFTTVAFVTGALALW), 321-341 (MIFGGITCVTGVLGVLTGVEI), 355-375 (LVCAVGMISSAPFLYLSLAFA), 385-405 (FIFIGETLLSLNWALVADILL), 419-439 (LQIVVSHLLGDAGSPYLIGVI), and 463-483 (MICAFVGVIGGGFFLATALFI).

This sequence belongs to the major facilitator superfamily. Spinster (TC 2.A.1.49) family.

It localises to the lysosome membrane. It catalyses the reaction a 1-acyl-sn-glycero-3-phosphocholine(out) + H(+)(out) = a 1-acyl-sn-glycero-3-phosphocholine(in) + H(+)(in). The catalysed reaction is a 1-acyl-sn-glycero-3-phosphoethanolamine(out) + H(+)(out) = a 1-acyl-sn-glycero-3-phosphoethanolamine(in) + H(+)(in). The enzyme catalyses a 1-O-(1Z-alkenyl)-sn-glycero-3-phosphocholine(out) + H(+)(out) = a 1-O-(1Z-alkenyl)-sn-glycero-3-phosphocholine(in) + H(+)(in). It carries out the reaction a 1-O-(1Z-alkenyl)-sn-glycero-3-phosphoethanolamine(out) + H(+)(out) = a 1-O-(1Z-alkenyl)-sn-glycero-3-phosphoethanolamine(in) + H(+)(in). Mediates the rate-limiting, proton-dependent, lysosomal efflux of lysophospholipids. Selective for zwitterionic headgroups such as lysophosphatidylcholine (LPC) and lysophosphatidylethanolamine (LPE). Essential player in lysosomal homeostasis. In Xenopus tropicalis (Western clawed frog), this protein is Protein spinster homolog 1 (spns1).